We begin with the raw amino-acid sequence, 1224 residues long: Integrin alpha pat-2 (1224 aa).

The first 27 residues, 1 to 27, serve as a signal peptide directing secretion; sequence MREGSFPRRTRLLCLLAAVVLISTVTS. At 28 to 1153 the chain is on the extracellular side; that stretch reads FNIDTKNVVL…ASEEGRDLPW (1126 aa). FG-GAP repeat units lie at residues 29–96, 110–173, 180–235, 236–292, 293–347, 364–423, and 427–490; these read NIDT…TCRE, NGSH…KTEE, EPAR…TDRP, NTEY…MMIN, LTDE…KPQY, GKQL…GVRE, and QKIE…PESA. N-linked (GlcNAc...) asparagine glycosylation is found at asparagine 74, asparagine 110, asparagine 230, and asparagine 292. The N-linked (GlcNAc...) asparagine glycan is linked to asparagine 610. Positions 622–624 match the Cell attachment site motif; it reads RGD. Asparagine 681, asparagine 775, and asparagine 819 each carry an N-linked (GlcNAc...) asparagine glycan. Disordered stretches follow at residues 898–968 and 981–1037; these read LRIT…QNTG and DYEY…KARF. Over residues 920-931 the composition is skewed to acidic residues; it reads REEDDESYEDET. Over residues 955 to 964 the composition is skewed to basic and acidic residues; that stretch reads VYERDEDKIR. Acidic residues predominate over residues 984–1003; that stretch reads YIPDDQEYDGDDFEDDDEDF. The segment covering 1008–1023 has biased composition (basic residues); the sequence is SKRVKRAPVPKKKKKE. Residues 1024–1037 are compositionally biased toward basic and acidic residues; sequence GSRSGEPRSDKARF. A helical transmembrane segment spans residues 1154 to 1174; that stretch reads WLYLLAILIGLAILILLILLL. Over 1175–1224 the chain is Cytoplasmic; sequence WRCGFFKRNRPPTEHAELRAEKQPAAHYADTQSRYAPQDQYSQGRHGQML. The tract at residues 1190 to 1224 is disordered; it reads AELRAEKQPAAHYADTQSRYAPQDQYSQGRHGQML. The segment covering 1204–1224 has biased composition (polar residues); the sequence is DTQSRYAPQDQYSQGRHGQML.

This sequence belongs to the integrin alpha chain family. As to quaternary structure, heterodimer of an alpha and a beta subunit. Alpha pat-2 associates with beta pat-3.

Its subcellular location is the membrane. Required for muscle development probably through the regulation of the actin-myosin cytoskeleton. During the formation of neuromuscular junctions at the larval stage, negatively regulates membrane protrusion from body wall muscles, probably through lamins such as epi-1, lam-2 and unc-52. Required for distal tip cell migration and dorsal pathfinding. Required for egg-laying. May play a role in cell motility and cell-cell interactions. The chain is Integrin alpha pat-2 from Caenorhabditis briggsae.